A 336-amino-acid polypeptide reads, in one-letter code: Protein-lysine N-methyltransferase EFM3 (336 aa).

S-adenosyl-L-methionine-binding positions include tryptophan 147, 173 to 175 (GTG), aspartate 196, leucine 232, and alanine 251.

This sequence belongs to the class I-like SAM-binding methyltransferase superfamily. EEF2KMT family.

It is found in the cytoplasm. In terms of biological role, S-adenosyl-L-methionine-dependent protein-lysine N-methyltransferase that methylates elongation factor 2. This Chaetomium thermophilum (strain DSM 1495 / CBS 144.50 / IMI 039719) (Thermochaetoides thermophila) protein is Protein-lysine N-methyltransferase EFM3.